Consider the following 382-residue polypeptide: D-galactonate dehydratase (382 aa).

Aspartate 183 lines the Mg(2+) pocket. Catalysis depends on histidine 185, which acts as the Proton donor. Mg(2+) contacts are provided by glutamate 209 and glutamate 235. The Proton acceptor role is filled by histidine 285.

The protein belongs to the mandelate racemase/muconate lactonizing enzyme family. GalD subfamily. Requires Mg(2+) as cofactor.

It carries out the reaction D-galactonate = 2-dehydro-3-deoxy-D-galactonate + H2O. The protein operates within carbohydrate acid metabolism; D-galactonate degradation; D-glyceraldehyde 3-phosphate and pyruvate from D-galactonate: step 1/3. Catalyzes the dehydration of D-galactonate to 2-keto-3-deoxy-D-galactonate. This chain is D-galactonate dehydratase, found in Escherichia coli O45:K1 (strain S88 / ExPEC).